A 1251-amino-acid chain; its full sequence is Botulinum neurotoxin type E (1251 aa).

H212 is a Zn(2+) binding site. Residue E213 is part of the active site. Residues H216 and E251 each coordinate Zn(2+). C412 and C426 are joined by a disulfide. Residues K423 to L819 form a translocation domain (TD) region. The interval N466–N515 is belt. The N-terminus of receptor binding domain (N-RBD) stretch occupies residues K845 to P1067. The tract at residues N1068–K1251 is C-terminus of receptor binding domain (C-RBD). Positions S1221–Y1224 match the Host ganglioside-binding motif motif.

Belongs to the peptidase M27 family. In terms of assembly, heterodimer; disulfide-linked heterodimer of a light chain (LC) and a heavy chain (HC). The LC has the proteolytic/pharmacological activity, while the N- and C-terminal of the HC mediate channel formation and toxin binding, respectively. Interacts with host synaptic vesicle glycoproteins SV2A and SV2B which probably serve as coreceptors. It depends on Zn(2+) as a cofactor.

It localises to the secreted. The protein resides in the host cytoplasm. It is found in the host cytosol. The protein localises to the host synapse. Its subcellular location is the host presynaptic cell membrane. It localises to the host cytoplasmic vesicle. The protein resides in the host secretory vesicle. It is found in the host synaptic vesicle membrane. The enzyme catalyses Limited hydrolysis of proteins of the neuroexocytosis apparatus, synaptobrevins, SNAP25 or syntaxin. No detected action on small molecule substrates.. In terms of biological role, botulinum toxin causes flaccid paralysis by inhibiting neurotransmitter (acetylcholine) release from the presynaptic membranes of nerve terminals of eukaryotic host skeletal and autonomic nervous system, with frequent heart or respiratory failure. Precursor of botulinum neurotoxin E which has 2 coreceptors; complex polysialylated gangliosides found on neural tissue and specific membrane-anchored proteins found in synaptic vesicles. Receptor proteins are exposed on host presynaptic cell membrane during neurotransmitter release, when the toxin heavy chain (HC) binds to them. Upon synaptic vesicle recycling the toxin is taken up via the endocytic pathway. When the pH of the toxin-containing endosome drops a structural rearrangement occurs so that the N-terminus of the HC forms pores that allows the light chain (LC) to translocate into the cytosol. Once in the cytosol the disulfide bond linking the 2 subunits is reduced and LC cleaves its target protein on synaptic vesicles, preventing their fusion with the cytoplasmic membrane and thus neurotransmitter release. Has proteolytic activity. After translocation into the eukaryotic host cytosol, LC hydrolyzes the '180-Arg-|-Ile-181' bond in SNAP25, blocking neurotransmitter release. Its function is as follows. Responsible for host epithelial cell transcytosis, host nerve cell targeting and translocation of light chain (LC) into host cytosol. Composed of 3 subdomains; the translocation domain (TD), and N-terminus and C-terminus of the receptor-binding domain (RBD). The RBD is responsible for the adherence of the toxin to the cell surface. It simultaneously recognizes 2 coreceptors; host polysialated gangliosides and the receptor proteins SV2A and SV2B in close proximity on host synaptic vesicles. Interaction with SV2 proteins requires SV2 glycosylation. The N-terminus of the TD wraps an extended belt around the perimeter of the LC, protecting Zn(2+) in the active site; it may also prevent premature LC dissociation from the translocation channel and protect toxin prior to translocation. The TD inserts into synaptic vesicle membrane to allow translocation into the host cytosol. Binds ganglioside GD1a in vitro. The chain is Botulinum neurotoxin type E from Clostridium butyricum.